The sequence spans 468 residues: Adenosylhomocysteinase (468 aa).

Substrate contacts are provided by Thr57, Asp132, and Glu194. An NAD(+)-binding site is contributed by 195-197 (TTT). Substrate-binding residues include Lys224 and Asp228. Residues Asn229, 258 to 263 (GFGDVG), Glu281, Asn316, 337 to 339 (IGH), and Asn382 each bind NAD(+).

This sequence belongs to the adenosylhomocysteinase family. NAD(+) is required as a cofactor.

It localises to the cytoplasm. The enzyme catalyses S-adenosyl-L-homocysteine + H2O = L-homocysteine + adenosine. Its pathway is amino-acid biosynthesis; L-homocysteine biosynthesis; L-homocysteine from S-adenosyl-L-homocysteine: step 1/1. In terms of biological role, may play a key role in the regulation of the intracellular concentration of adenosylhomocysteine. The chain is Adenosylhomocysteinase from Methylorubrum populi (strain ATCC BAA-705 / NCIMB 13946 / BJ001) (Methylobacterium populi).